Here is a 158-residue protein sequence, read N- to C-terminus: Small ribosomal subunit protein uS15 (158 aa).

Basic residues predominate over residues 1-10; that stretch reads MARMHTRRRG. The interval 1 to 66 is disordered; that stretch reads MARMHTRRRG…EGVKGTPIPD (66 aa). Positions 21-32 are enriched in acidic residues; the sequence is DPPEWSDIDADA. Positions 33 to 45 are enriched in basic and acidic residues; sequence IEERVVELAEQGH.

The protein belongs to the universal ribosomal protein uS15 family. In terms of assembly, part of the 30S ribosomal subunit.

The polypeptide is Small ribosomal subunit protein uS15 (Haloquadratum walsbyi (strain DSM 16790 / HBSQ001)).